The primary structure comprises 346 residues: Methylthioribose-1-phosphate isomerase (346 aa).

Substrate-binding positions include 46-48, Arg-89, and Gln-196; that span reads RGA. Residue Asp-237 is the Proton donor of the active site. Position 247–248 (247–248) interacts with substrate; the sequence is NK.

It belongs to the eIF-2B alpha/beta/delta subunits family. MtnA subfamily.

It catalyses the reaction 5-(methylsulfanyl)-alpha-D-ribose 1-phosphate = 5-(methylsulfanyl)-D-ribulose 1-phosphate. The protein operates within amino-acid biosynthesis; L-methionine biosynthesis via salvage pathway; L-methionine from S-methyl-5-thio-alpha-D-ribose 1-phosphate: step 1/6. In terms of biological role, catalyzes the interconversion of methylthioribose-1-phosphate (MTR-1-P) into methylthioribulose-1-phosphate (MTRu-1-P). The polypeptide is Methylthioribose-1-phosphate isomerase (Geobacter metallireducens (strain ATCC 53774 / DSM 7210 / GS-15)).